The sequence spans 70 residues: Large ribosomal subunit protein uL29 (70 aa).

Belongs to the universal ribosomal protein uL29 family.

This chain is Large ribosomal subunit protein uL29, found in Prochlorococcus marinus (strain MIT 9303).